A 542-amino-acid polypeptide reads, in one-letter code: Chaperonin GroEL (542 aa).

ATP-binding positions include 29–32 (TLGP), 86–90 (DGTTT), glycine 413, 476–478 (NAA), and aspartate 492.

The protein belongs to the chaperonin (HSP60) family. As to quaternary structure, forms a cylinder of 14 subunits composed of two heptameric rings stacked back-to-back. Interacts with the co-chaperonin GroES.

It is found in the cytoplasm. The catalysed reaction is ATP + H2O + a folded polypeptide = ADP + phosphate + an unfolded polypeptide.. Its function is as follows. Together with its co-chaperonin GroES, plays an essential role in assisting protein folding. The GroEL-GroES system forms a nano-cage that allows encapsulation of the non-native substrate proteins and provides a physical environment optimized to promote and accelerate protein folding. The protein is Chaperonin GroEL of Streptococcus mutans serotype c (strain ATCC 700610 / UA159).